Consider the following 1235-residue polypeptide: N-acetylglucosamine-1-phosphotransferase subunits alpha/beta (1235 aa).

Residues 22–42 (VCFVGVVVTIVSAFQFGEVVL) traverse the membrane as a helical segment. Asn-83, Asn-114, Asn-148, and Asn-179 each carry an N-linked (GlcNAc...) asparagine glycan. Intrachain disulfides connect Cys-438-Cys-461, Cys-452-Cys-468, Cys-505-Cys-528, and Cys-519-Cys-535. LNR repeat units follow at residues 438–473 (CAEGCPGSWIKDGYCDKACNNSACDWDGGDCSGNTA) and 505–545 (CNQG…ELYK). Ca(2+) is bound by residues Asp-449, Asp-464, Asp-467, Asp-516, Asp-531, and Asp-534. N-linked (GlcNAc...) asparagine glycans are attached at residues Asn-614 and Asn-729. Residues 699–823 (NISLLPKEAQ…AQPTLGVTVS (125 aa)) enclose the DMAP1-binding domain. Disordered regions lie at residues 751-783 (QARTDETKGNLEVPQENPSHRRPHGFAGEHRSE) and 830-850 (LIVPPESHLPKEEESDRAEGN). Over residues 837–848 (HLPKEEESDRAE) the composition is skewed to basic and acidic residues. The 36-residue stretch at 984–1019 (VQPLNISQVFHEVDTDQSGVLSDREIRTLATRIHDL) folds into the EF-hand domain. An N-linked (GlcNAc...) asparagine glycan is attached at Asn-988. Ca(2+) contacts are provided by Asp-997, Asp-999, Ser-1001, and Glu-1008. Asn-1108 carries an N-linked (GlcNAc...) asparagine glycan. Residues 1194 to 1214 (VLATLIIFTIFSFFAEQIIAL) form a helical membrane-spanning segment.

It belongs to the stealth family. As to quaternary structure, hexamer of two alpha, two beta and two gamma (GNPTG) subunits; disulfide-linked. The alpha and/or the beta subunits of the enzyme constitute the catalytic subunits. Interacts with LYSET; facilitates proper localization of GNPTAB. In terms of processing, the alpha- and beta-subunits are generated by a proteolytic cleavage by MBTPS1 protease at the Lys-907-Asp-908 bond.

It localises to the golgi apparatus membrane. It carries out the reaction N(4)-[alpha-D-mannosyl-(1-&gt;2)-alpha-D-mannosyl-(glycan)]-L-asparaginyl-[protein] + UDP-N-acetyl-alpha-D-glucosamine = N(4)-[6-(N-acetyl-alpha-D-glucosaminyl-1-phospho)-alpha-D-mannosyl-(1-&gt;2)-alpha-D-mannosyl-(glycan)]-L-asparaginyl-[protein] + UMP + H(+). Its function is as follows. Catalyzes the formation of mannose 6-phosphate (M6P) markers on high mannose type oligosaccharides in the Golgi apparatus. M6P residues are required to bind to the M6P receptors (MPR), which mediate the vesicular transport of lysosomal enzymes to the endosomal/prelysosomal compartment. The polypeptide is N-acetylglucosamine-1-phosphotransferase subunits alpha/beta (Gnptab) (Mus musculus (Mouse)).